The primary structure comprises 581 residues: Adenine deaminase (581 aa).

It belongs to the metallo-dependent hydrolases superfamily. Adenine deaminase family. Requires Mn(2+) as cofactor.

It catalyses the reaction adenine + H2O + H(+) = hypoxanthine + NH4(+). This Brucella melitensis biotype 1 (strain ATCC 23456 / CCUG 17765 / NCTC 10094 / 16M) protein is Adenine deaminase.